A 372-amino-acid chain; its full sequence is MKYDLIIIGSGSVGAAAGYYATRAGLNVLMTDAHMPPHQHGSHHGDTRLIRHAYGEGEKYVPLVLRAQTLWDELSRHNEDDPIFVRSGVINLGPADSAFLANVAHSAEQWQLNVEKLDAQGIMARWPEIRVPDNYIGLFETDSGFLRSELAIKTWIQLAKEAGCAQLFNCPVTAIRHDDDGVTIETADGEYQAKKAIVCAGTWVKDLLPELPVQPVRKVFAWYQADGRYSVKNKFPAFTGELPNGDQYYGFPAENDALKIGKHNGGQVIHSADERVPFAEVVSDGSEAFPFLRNVLPGIGCCLYGAACTYDNSPDEDFIIDTLPGHDNTLLITGLSGHGFKFASVLGEIAADFAQDKKSDFDLTPFRLSRFQ.

Residue 4–34 participates in FAD binding; it reads DLIIIGSGSVGAAAGYYATRAGLNVLMTDAH. Position 308 is an S-8alpha-FAD cysteine (Cys-308).

This sequence belongs to the MSOX/MTOX family. MTOX subfamily. In terms of assembly, monomer. Requires FAD as cofactor.

The catalysed reaction is N(alpha)-methyl-L-tryptophan + O2 + H2O = L-tryptophan + formaldehyde + H2O2. In terms of biological role, catalyzes the oxidative demethylation of N-methyl-L-tryptophan. The sequence is that of N-methyl-L-tryptophan oxidase from Escherichia coli O9:H4 (strain HS).